The following is a 508-amino-acid chain: MDFSIKACDWTKGSSNGFLTGKSDCIVIGVFESQTLSGAALEIDEATRGLLTRIIKAGDMDGKAGTTLFLHEVSGIGASRVLLVGLGKQDAFNQKAYGDAVRAAWRALLGTKIVQVTFTLAQAPILERTADWGVRAAILALRELTYKFTQMKSKPENAARALKRIVFSVNTGDEKAAKLAAKQGAALANGMDLTRDLGNLPSNVCTPTYLANTAKKLAKDWKLKVEVLGEKQCEALKMGSFLSVTAGSVEPAQFIVLQYQGGAAKAAPVVLVGKGVTFDTGGISLKPGEGMDEMKYDMCGAGSVLGTLRAVAEMGLKLNVVGIIPAVENMPSATATKPGDIVTSMKGLTIEVLNTDAEGRLILCDALTYAERFKPAAVIDIATLTGACIIALGHHNSGLFSKDDALAGELLDASREASDPAWRLPLDDEYQDQLKSNFADLANIGGRPAGSVTAACFLSRFTDAYPWAHLDIAGTAWKSGAAKGATGRPVPLLAQFLIDRAADGRATQ.

Lysine 274 and aspartate 279 together coordinate Mn(2+). Lysine 286 is an active-site residue. Residues aspartate 297, aspartate 356, and glutamate 358 each contribute to the Mn(2+) site. Arginine 360 is an active-site residue.

This sequence belongs to the peptidase M17 family. The cofactor is Mn(2+).

The protein resides in the cytoplasm. It catalyses the reaction Release of an N-terminal amino acid, Xaa-|-Yaa-, in which Xaa is preferably Leu, but may be other amino acids including Pro although not Arg or Lys, and Yaa may be Pro. Amino acid amides and methyl esters are also readily hydrolyzed, but rates on arylamides are exceedingly low.. The enzyme catalyses Release of an N-terminal amino acid, preferentially leucine, but not glutamic or aspartic acids.. Its function is as follows. Presumably involved in the processing and regular turnover of intracellular proteins. Catalyzes the removal of unsubstituted N-terminal amino acids from various peptides. This chain is Probable cytosol aminopeptidase, found in Paraburkholderia phytofirmans (strain DSM 17436 / LMG 22146 / PsJN) (Burkholderia phytofirmans).